A 216-amino-acid chain; its full sequence is ATP phosphoribosyltransferase (216 aa).

Belongs to the ATP phosphoribosyltransferase family. Short subfamily. As to quaternary structure, heteromultimer composed of HisG and HisZ subunits.

It localises to the cytoplasm. The enzyme catalyses 1-(5-phospho-beta-D-ribosyl)-ATP + diphosphate = 5-phospho-alpha-D-ribose 1-diphosphate + ATP. It participates in amino-acid biosynthesis; L-histidine biosynthesis; L-histidine from 5-phospho-alpha-D-ribose 1-diphosphate: step 1/9. Functionally, catalyzes the condensation of ATP and 5-phosphoribose 1-diphosphate to form N'-(5'-phosphoribosyl)-ATP (PR-ATP). Has a crucial role in the pathway because the rate of histidine biosynthesis seems to be controlled primarily by regulation of HisG enzymatic activity. The protein is ATP phosphoribosyltransferase of Microcystis aeruginosa (strain NIES-843 / IAM M-2473).